A 223-amino-acid chain; its full sequence is Uridylate kinase (223 aa).

9–10 is an ATP binding site; it reads GS. G43 provides a ligand contact to UMP. Residues G44 and R48 each contribute to the ATP site. UMP is bound by residues D65 and 112 to 118; that span reads THPGHTT. ATP-binding residues include T137, N138, Y143, and D146.

Belongs to the UMP kinase family. Homohexamer.

The protein resides in the cytoplasm. It carries out the reaction UMP + ATP = UDP + ADP. Its pathway is pyrimidine metabolism; CTP biosynthesis via de novo pathway; UDP from UMP (UMPK route): step 1/1. Inhibited by UTP. Its function is as follows. Catalyzes the reversible phosphorylation of UMP to UDP. In Methanopyrus kandleri (strain AV19 / DSM 6324 / JCM 9639 / NBRC 100938), this protein is Uridylate kinase.